The primary structure comprises 696 residues: HIPL2 protein (696 aa).

The signal sequence occupies residues 1–24 (MAKTNQAITICSLLLLLLLSETTS). 14 N-linked (GlcNAc...) asparagine glycosylation sites follow: N38, N69, N74, N108, N124, N148, N175, N339, N431, N513, N519, N528, N581, and N651. Residue S672 is the site of GPI-anchor amidated serine attachment. Positions 673–696 (SARKLCFSVFLLLSLLMMFLTLLD) are cleaved as a propeptide — removed in mature form.

Belongs to the PQQ oxidoreductase GdhB family. Pyrroloquinoline quinone is required as a cofactor.

Its subcellular location is the cell membrane. This Arabidopsis thaliana (Mouse-ear cress) protein is HIPL2 protein (HIPL2).